A 403-amino-acid chain; its full sequence is S-adenosylmethionine synthase (403 aa).

Residue His17 participates in ATP binding. Asp19 lines the Mg(2+) pocket. K(+) is bound at residue Glu45. Positions 58 and 104 each coordinate L-methionine. The flexible loop stretch occupies residues 104 to 114 (QSPDIAQGVDT). ATP contacts are provided by residues 179–181 (DGK), 250–251 (KF), Asp259, 265–266 (RK), Ala282, and Lys286. Asp259 lines the L-methionine pocket. Residue Lys290 coordinates L-methionine.

The protein belongs to the AdoMet synthase family. As to quaternary structure, homotetramer; dimer of dimers. Requires Mg(2+) as cofactor. K(+) is required as a cofactor.

The protein resides in the cytoplasm. It carries out the reaction L-methionine + ATP + H2O = S-adenosyl-L-methionine + phosphate + diphosphate. Its pathway is amino-acid biosynthesis; S-adenosyl-L-methionine biosynthesis; S-adenosyl-L-methionine from L-methionine: step 1/1. In terms of biological role, catalyzes the formation of S-adenosylmethionine (AdoMet) from methionine and ATP. The overall synthetic reaction is composed of two sequential steps, AdoMet formation and the subsequent tripolyphosphate hydrolysis which occurs prior to release of AdoMet from the enzyme. The chain is S-adenosylmethionine synthase from Mycolicibacterium paratuberculosis (strain ATCC BAA-968 / K-10) (Mycobacterium paratuberculosis).